Consider the following 87-residue polypeptide: NADH dehydrogenase [ubiquinone] 1 alpha subcomplex subunit 4-like 2 (87 aa).

The protein belongs to the complex I NDUFA4 subunit family.

The chain is NADH dehydrogenase [ubiquinone] 1 alpha subcomplex subunit 4-like 2 (NDUFA4L2) from Homo sapiens (Human).